Reading from the N-terminus, the 232-residue chain is MVDTALHPIPGRRTPPHPRSTLPLTTPPAAAELFGDNLDKAIAYHESLATDGSVRGFIGPREIPRLWDRHILNCGVIGEAMEEGISVADVGSGAGLPGIPLAIARPDLKIILIEPLLKRSVYLGEVIEQLGLDNVSVIRGRAEEKAVRKQVGHVDVVTSRAVAPLGRLASWSLPLAKVGGRMIAMKGASVAEEIERDAKAIRNAGGGEVKVFTVGGELLDEPTTLISIRREK.

Positions 1–24 (MVDTALHPIPGRRTPPHPRSTLPL) are disordered. Residues glycine 91, leucine 96, 142–143 (AE), and arginine 160 contribute to the S-adenosyl-L-methionine site.

This sequence belongs to the methyltransferase superfamily. RNA methyltransferase RsmG family.

It localises to the cytoplasm. Its function is as follows. Specifically methylates the N7 position of guanine in position 518 of 16S rRNA. In Corynebacterium efficiens (strain DSM 44549 / YS-314 / AJ 12310 / JCM 11189 / NBRC 100395), this protein is Ribosomal RNA small subunit methyltransferase G.